A 410-amino-acid polypeptide reads, in one-letter code: Thyroid hormone receptor alpha (410 aa).

Positions 1 to 32 (MEQKPSKVECGSDPEESSTRSPDGKRKRKNGQ) are disordered. Residues 1-52 (MEQKPSKVECGSDPEESSTRSPDGKRKRKNGQCSLKTSMSGYIPSYLDKDEQ) form a modulating region. C53, C56, C70, C73, C91, C97, C107, and C110 together coordinate Zn(2+). NR C4-type zinc fingers lie at residues 53–73 (CVVCGDKATGYHYRCITCEGC) and 91–115 (CKYDSCCVIDKITRNQCQLCRFKKC). The nuclear receptor DNA-binding region spans 53–127 (CVVCGDKATG…VGMAMDLVLD (75 aa)). Residues 163-407 (EEWDLIHVAT…PPLFLEVFED (245 aa)) enclose the NR LBD domain. Residues R228 and S277 each coordinate 3,3',5-triiodo-L-thyronine.

It belongs to the nuclear hormone receptor family. NR1 subfamily. Binds DNA as a dimer; homodimer and heterodimer with RXRB. Interacts with NCOA3 and NCOA6 coactivators, leading to a strong increase of transcription of target genes. Probably interacts with SFPQ. Interacts with C1D. Interacts with AKAP13. Interacts with TP53INP2. Interacts with PER2. Interacts with TACC1. The interaction with isoform alpha-1, but not alpha-2, is decreased in the presence of thyroid hormone T3.

The protein resides in the nucleus. It is found in the cytoplasm. Functionally, nuclear hormone receptor that can act as a repressor or activator of transcription. High affinity receptor for thyroid hormones, including triiodothyronine and thyroxine. The protein is Thyroid hormone receptor alpha (THRA) of Ovis aries (Sheep).